Here is an 89-residue protein sequence, read N- to C-terminus: Elongation factor 1-beta (89 aa).

The protein belongs to the EF-1-beta/EF-1-delta family.

Functionally, promotes the exchange of GDP for GTP in EF-1-alpha/GDP, thus allowing the regeneration of EF-1-alpha/GTP that could then be used to form the ternary complex EF-1-alpha/GTP/AAtRNA. This is Elongation factor 1-beta from Methanosarcina acetivorans (strain ATCC 35395 / DSM 2834 / JCM 12185 / C2A).